The following is a 110-amino-acid chain: uncharacterized protein (110 aa).

An N-terminal signal peptide occupies residues 1 to 16 (MKKILLIASMTAGLTA). Cys17 is lipidated: N-palmitoyl cysteine. Cys17 carries the S-diacylglycerol cysteine lipid modification.

The protein localises to the cell membrane. This is an uncharacterized protein from Salmonella typhimurium (strain LT2 / SGSC1412 / ATCC 700720).